The following is a 142-amino-acid chain: Small ribosomal subunit protein uS12 (142 aa).

The protein belongs to the universal ribosomal protein uS12 family. In terms of assembly, part of the 30S ribosomal subunit.

Its function is as follows. With S4 and S5 plays an important role in translational accuracy. Located at the interface of the 30S and 50S subunits. The chain is Small ribosomal subunit protein uS12 from Methanococcoides burtonii (strain DSM 6242 / NBRC 107633 / OCM 468 / ACE-M).